The sequence spans 60 residues: Protein translocase subunit SecE (60 aa).

The helical transmembrane segment at 31-51 (IIVVSTVIFFLVFFYALDIGI) threads the bilayer.

This sequence belongs to the SecE/SEC61-gamma family. As to quaternary structure, component of the Sec protein translocase complex. Heterotrimer consisting of SecY, SecE and SecG subunits. The heterotrimers can form oligomers, although 1 heterotrimer is thought to be able to translocate proteins. Interacts with the ribosome. Interacts with SecDF, and other proteins may be involved. Interacts with SecA.

It localises to the cell membrane. Essential subunit of the Sec protein translocation channel SecYEG. Clamps together the 2 halves of SecY. May contact the channel plug during translocation. This Staphylococcus epidermidis (strain ATCC 35984 / DSM 28319 / BCRC 17069 / CCUG 31568 / BM 3577 / RP62A) protein is Protein translocase subunit SecE.